Consider the following 316-residue polypeptide: Porphobilinogen deaminase (316 aa).

At C240 the chain carries S-(dipyrrolylmethanemethyl)cysteine.

Belongs to the HMBS family. In terms of assembly, monomer. The cofactor is dipyrromethane.

The catalysed reaction is 4 porphobilinogen + H2O = hydroxymethylbilane + 4 NH4(+). It participates in porphyrin-containing compound metabolism; protoporphyrin-IX biosynthesis; coproporphyrinogen-III from 5-aminolevulinate: step 2/4. Functionally, tetrapolymerization of the monopyrrole PBG into the hydroxymethylbilane pre-uroporphyrinogen in several discrete steps. This chain is Porphobilinogen deaminase, found in Alkaliphilus metalliredigens (strain QYMF).